Reading from the N-terminus, the 156-residue chain is Probable cyclic pyranopterin monophosphate synthase (156 aa).

Position 109 to 110 (109 to 110) interacts with substrate; sequence MD. The active site involves Asp-124.

Belongs to the MoaC family. As to quaternary structure, homohexamer; trimer of dimers.

It carries out the reaction (8S)-3',8-cyclo-7,8-dihydroguanosine 5'-triphosphate = cyclic pyranopterin phosphate + diphosphate. It participates in cofactor biosynthesis; molybdopterin biosynthesis. Its function is as follows. Catalyzes the conversion of (8S)-3',8-cyclo-7,8-dihydroguanosine 5'-triphosphate to cyclic pyranopterin monophosphate (cPMP). The protein is Probable cyclic pyranopterin monophosphate synthase of Methanopyrus kandleri (strain AV19 / DSM 6324 / JCM 9639 / NBRC 100938).